Here is an 859-residue protein sequence, read N- to C-terminus: Rod cGMP-specific 3',5'-cyclic phosphodiesterase subunit alpha (859 aa).

Position 2 is an N-acetylglycine (Gly-2). 2 consecutive GAF domains span residues 73–222 (QAEK…NLIM) and 254–431 (DIER…GWSV). Residues 483–816 (EEEELAEILQ…KEWKALADEY (334 aa)) form the PDEase domain. His-559 serves as the catalytic Proton donor. A divalent metal cation contacts are provided by His-563, His-599, Asp-600, and Asp-720. The tract at residues 823 to 859 (LEEEKQKQQAAKQAASGNQPGGNPLQGAPASKSCCIQ) is disordered. The residue at position 856 (Cys-856) is a Cysteine methyl ester. Residue Cys-856 is the site of S-farnesyl cysteine attachment. Residues 857 to 859 (CIQ) constitute a propeptide, removed in mature form.

This sequence belongs to the cyclic nucleotide phosphodiesterase family. Oligomer composed of two catalytic chains (alpha and beta), an inhibitory chain (gamma) and the delta chain. Requires a divalent metal cation as cofactor.

It is found in the cell membrane. Its subcellular location is the cell projection. The protein resides in the cilium. The protein localises to the photoreceptor outer segment. It catalyses the reaction 3',5'-cyclic GMP + H2O = GMP + H(+). Functionally, rod-specific cGMP phosphodiesterase that catalyzes the hydrolysis of 3',5'-cyclic GMP. This protein participates in processes of transmission and amplification of the visual signal. The sequence is that of Rod cGMP-specific 3',5'-cyclic phosphodiesterase subunit alpha from Mus musculus (Mouse).